The following is a 154-amino-acid chain: Ribosome maturation factor RimP (154 aa).

The protein belongs to the RimP family.

The protein resides in the cytoplasm. Its function is as follows. Required for maturation of 30S ribosomal subunits. In Salmonella gallinarum (strain 287/91 / NCTC 13346), this protein is Ribosome maturation factor RimP.